The primary structure comprises 121 residues: MMLPQWLLLLFLLFFFLFLLTRGSLSPTKYNLLELKESCIRNQDCETGCCQRAPDNCESHCAEKGSEGSLCQTQVFFGQYRACPCLRNLTCIYSKNEKWLSIAYGRCQKIGRQKLAKKMFF.

Positions 1–23 (MMLPQWLLLLFLLFFFLFLLTRG) are cleaved as a signal peptide. 5 disulfide bridges follow: Cys39–Cys50, Cys45–Cys61, Cys49–Cys83, Cys71–Cys91, and Cys85–Cys107.

Belongs to the colipase family. As to expression, exclusively expressed in epididymis, in the corpus region.

Its subcellular location is the secreted. In Homo sapiens (Human), this protein is Colipase-like protein 1 (CLPSL1).